The primary structure comprises 573 residues: NADH-ubiquinone oxidoreductase chain 5 (573 aa).

16 helical membrane passes run 4–24 (ISFI…LYYL), 44–64 (IVMT…VLMI), 85–105 (FIML…SPNL), 106–126 (VSIL…VIYF), 147–167 (VALL…YIFY), 170–190 (VMQN…AAMT), 212–234 (SALV…FNIV), 239–259 (WLGQ…GLGA), 268–288 (IIAL…SMGF), 294–314 (FHLL…GAII), 337–357 (SACF…AGFY), 377–396 (FLYF…LVYY), 422–442 (LGLL…IFPF), 452–472 (LKML…LISI), 487–507 (LTLF…GMIF), and 552–572 (LKIY…FLLF).

Belongs to the complex I subunit 5 family.

It localises to the mitochondrion inner membrane. It carries out the reaction a ubiquinone + NADH + 5 H(+)(in) = a ubiquinol + NAD(+) + 4 H(+)(out). In terms of biological role, core subunit of the mitochondrial membrane respiratory chain NADH dehydrogenase (Complex I) that is believed to belong to the minimal assembly required for catalysis. Complex I functions in the transfer of electrons from NADH to the respiratory chain. The immediate electron acceptor for the enzyme is believed to be ubiquinone. This chain is NADH-ubiquinone oxidoreductase chain 5 (mt:ND5), found in Drosophila yakuba (Fruit fly).